The chain runs to 919 residues: Phosphoenolpyruvate carboxylase (919 aa).

Catalysis depends on residues His-138 and Lys-579.

This sequence belongs to the PEPCase type 1 family. The cofactor is Mg(2+).

It catalyses the reaction oxaloacetate + phosphate = phosphoenolpyruvate + hydrogencarbonate. Its activity is regulated as follows. Activity not stimulated by acetyl-CoA in the absence of any allosteric inhibitor, while the corresponding protein from E.coli is strongly stimulated. Functionally, forms oxaloacetate, a four-carbon dicarboxylic acid source for the tricarboxylic acid cycle. The chain is Phosphoenolpyruvate carboxylase (ppc) from Corynebacterium glutamicum (strain ATCC 13032 / DSM 20300 / JCM 1318 / BCRC 11384 / CCUG 27702 / LMG 3730 / NBRC 12168 / NCIMB 10025 / NRRL B-2784 / 534).